We begin with the raw amino-acid sequence, 75 residues long: Small ribosomal subunit protein bS18c (75 aa).

It belongs to the bacterial ribosomal protein bS18 family. Part of the 30S ribosomal subunit.

Its subcellular location is the plastid. It localises to the chloroplast. In Adiantum capillus-veneris (Maidenhair fern), this protein is Small ribosomal subunit protein bS18c.